The primary structure comprises 394 residues: Succinate--CoA ligase [ADP-forming] subunit beta 1 (394 aa).

The region spanning 9 to 237 (RDLFAKHDVP…KAAANPLEAA (229 aa)) is the ATP-grasp domain. ATP is bound by residues K45, 52 to 54 (GRG), E92, P95, and E100. Mg(2+) contacts are provided by N192 and D206. Residues N257 and 319-321 (GIT) contribute to the substrate site.

This sequence belongs to the succinate/malate CoA ligase beta subunit family. As to quaternary structure, heterotetramer of two alpha and two beta subunits. Requires Mg(2+) as cofactor.

It catalyses the reaction succinate + ATP + CoA = succinyl-CoA + ADP + phosphate. It carries out the reaction GTP + succinate + CoA = succinyl-CoA + GDP + phosphate. It participates in carbohydrate metabolism; tricarboxylic acid cycle; succinate from succinyl-CoA (ligase route): step 1/1. Functionally, succinyl-CoA synthetase functions in the citric acid cycle (TCA), coupling the hydrolysis of succinyl-CoA to the synthesis of either ATP or GTP and thus represents the only step of substrate-level phosphorylation in the TCA. The beta subunit provides nucleotide specificity of the enzyme and binds the substrate succinate, while the binding sites for coenzyme A and phosphate are found in the alpha subunit. The polypeptide is Succinate--CoA ligase [ADP-forming] subunit beta 1 (Streptomyces coelicolor (strain ATCC BAA-471 / A3(2) / M145)).